A 453-amino-acid polypeptide reads, in one-letter code: Ribosome biogenesis protein YTM1 (453 aa).

The ubiquitin-like (UBL) domain stretch occupies residues 19–102 (VKVRFFTNEE…ETVIDLQYTR (84 aa)). A sufficient for interaction with ERB1 and association with 66S pre-ribosomes region spans residues 112–453 (SFTNEDWISS…KKIDIYREAN (342 aa)). WD repeat units follow at residues 128–166 (GHGA…ESQY), 168–206 (GHSG…VEEG), 218–257 (GHKG…MSAV), 292–332 (GHGQ…CVDT), 334–373 (STGF…STEQ), 380–420 (GHTN…AMYT), and 422–453 (GKGG…REAN).

It belongs to the WD repeat WDR12/YTM1 family. Component of the NOP7 complex, composed of ERB1, NOP7 and YTM1. The complex is held together by ERB1, which interacts with NOP7 via its N-terminal domain and with YTM1 via a high-affinity interaction between the seven-bladed beta-propeller domains of the 2 proteins. The NOP7 complex associates with the 66S pre-ribosome. Interacts (via UBL domain) with MDN1 (via VWFA/MIDAS domain).

It localises to the nucleus. The protein localises to the nucleolus. Its subcellular location is the nucleoplasm. Its function is as follows. Component of the NOP7 complex, which is required for maturation of the 25S and 5.8S ribosomal RNAs and formation of the 60S ribosome. The chain is Ribosome biogenesis protein YTM1 from Meyerozyma guilliermondii (strain ATCC 6260 / CBS 566 / DSM 6381 / JCM 1539 / NBRC 10279 / NRRL Y-324) (Yeast).